A 152-amino-acid chain; its full sequence is Single-stranded DNA-binding protein, mitochondrial (152 aa).

Residues 1–16 (MFRRPVLQVFRQFVRH) constitute a mitochondrion transit peptide. Positions 30-141 (LNRVQLLGRV…IIAGKKLVVH (112 aa)) constitute an SSB domain. Residues S67 and S79 each carry the phosphoserine modification. At K113 the chain carries N6-acetyllysine. Position 122 is an N6-succinyllysine (K122).

Homotetramer. Interacts with MPG/AAG, through inhibition of its glycosylase activity it potentially prevents formation of DNA breaks in ssDNA, ensuring that base removal primarily occurs in dsDNA. Interacts with POLDIP2. Interacts with PRIMPOL. Expressed in all the layers of the retina (at protein level).

It is found in the mitochondrion. Its subcellular location is the mitochondrion matrix. It localises to the mitochondrion nucleoid. Binds preferentially and cooperatively to pyrimidine rich single-stranded DNA (ss-DNA). In vitro, required to maintain the copy number of mitochondrial DNA (mtDNA) and plays a crucial role during mtDNA replication by stimulating the activity of the replisome components POLG and TWNK at the replication fork. Promotes the activity of the gamma complex polymerase POLG, largely by organizing the template DNA and eliminating secondary structures to favor ss-DNA conformations that facilitate POLG activity. In addition it is able to promote the 5'-3' unwinding activity of the mtDNA helicase TWNK. May also function in mtDNA repair. This chain is Single-stranded DNA-binding protein, mitochondrial (Ssbp1), found in Mus musculus (Mouse).